A 284-amino-acid chain; its full sequence is 4-hydroxy-3-methylbut-2-enyl diphosphate reductase (284 aa).

Cys12 contacts [4Fe-4S] cluster. Positions 40 and 72 each coordinate (2E)-4-hydroxy-3-methylbut-2-enyl diphosphate. His40 and His72 together coordinate dimethylallyl diphosphate. 2 residues coordinate isopentenyl diphosphate: His40 and His72. Residue Cys94 coordinates [4Fe-4S] cluster. (2E)-4-hydroxy-3-methylbut-2-enyl diphosphate is bound at residue His122. Residue His122 participates in dimethylallyl diphosphate binding. Residue His122 coordinates isopentenyl diphosphate. Glu124 functions as the Proton donor in the catalytic mechanism. Residue Thr161 coordinates (2E)-4-hydroxy-3-methylbut-2-enyl diphosphate. Cys193 contributes to the [4Fe-4S] cluster binding site. Residues Ser221, Asn223, and Ser264 each coordinate (2E)-4-hydroxy-3-methylbut-2-enyl diphosphate. Dimethylallyl diphosphate is bound by residues Ser221, Asn223, and Ser264. Isopentenyl diphosphate is bound by residues Ser221, Asn223, and Ser264.

It belongs to the IspH family. It depends on [4Fe-4S] cluster as a cofactor.

The catalysed reaction is isopentenyl diphosphate + 2 oxidized [2Fe-2S]-[ferredoxin] + H2O = (2E)-4-hydroxy-3-methylbut-2-enyl diphosphate + 2 reduced [2Fe-2S]-[ferredoxin] + 2 H(+). It carries out the reaction dimethylallyl diphosphate + 2 oxidized [2Fe-2S]-[ferredoxin] + H2O = (2E)-4-hydroxy-3-methylbut-2-enyl diphosphate + 2 reduced [2Fe-2S]-[ferredoxin] + 2 H(+). The protein operates within isoprenoid biosynthesis; dimethylallyl diphosphate biosynthesis; dimethylallyl diphosphate from (2E)-4-hydroxy-3-methylbutenyl diphosphate: step 1/1. Its pathway is isoprenoid biosynthesis; isopentenyl diphosphate biosynthesis via DXP pathway; isopentenyl diphosphate from 1-deoxy-D-xylulose 5-phosphate: step 6/6. Its function is as follows. Catalyzes the conversion of 1-hydroxy-2-methyl-2-(E)-butenyl 4-diphosphate (HMBPP) into a mixture of isopentenyl diphosphate (IPP) and dimethylallyl diphosphate (DMAPP). Acts in the terminal step of the DOXP/MEP pathway for isoprenoid precursor biosynthesis. This is 4-hydroxy-3-methylbut-2-enyl diphosphate reductase from Dehalococcoides mccartyi (strain ATCC BAA-2100 / JCM 16839 / KCTC 5957 / BAV1).